Here is a 63-residue protein sequence, read N- to C-terminus: Cytochrome c oxidase subunit 5A, mitochondrial (63 aa).

This sequence belongs to the cytochrome c oxidase subunit 5A family. As to quaternary structure, component of the cytochrome c oxidase (complex IV, CIV), a multisubunit enzyme composed of a catalytic core of 3 subunits and several supernumerary subunits. The complex exists as a monomer or a dimer and forms supercomplexes (SCs) in the inner mitochondrial membrane with ubiquinol-cytochrome c oxidoreductase (cytochrome b-c1 complex, complex III, CIII).

The protein localises to the mitochondrion inner membrane. It participates in energy metabolism; oxidative phosphorylation. In terms of biological role, component of the cytochrome c oxidase, the last enzyme in the mitochondrial electron transport chain which drives oxidative phosphorylation. The respiratory chain contains 3 multisubunit complexes succinate dehydrogenase (complex II, CII), ubiquinol-cytochrome c oxidoreductase (cytochrome b-c1 complex, complex III, CIII) and cytochrome c oxidase (complex IV, CIV), that cooperate to transfer electrons derived from NADH and succinate to molecular oxygen, creating an electrochemical gradient over the inner membrane that drives transmembrane transport and the ATP synthase. Cytochrome c oxidase is the component of the respiratory chain that catalyzes the reduction of oxygen to water. Electrons originating from reduced cytochrome c in the intermembrane space (IMS) are transferred via the dinuclear copper A center (CU(A)) of subunit 2 and heme A of subunit 1 to the active site in subunit 1, a binuclear center (BNC) formed by heme A3 and copper B (CU(B)). The BNC reduces molecular oxygen to 2 water molecules using 4 electrons from cytochrome c in the IMS and 4 protons from the mitochondrial matrix. The sequence is that of Cytochrome c oxidase subunit 5A, mitochondrial (COVA) from Manduca sexta (Tobacco hawkmoth).